Reading from the N-terminus, the 423-residue chain is Limonoid 21-O-acetyltransferse (423 aa).

Active-site proton acceptor residues include histidine 152 and aspartate 362.

This sequence belongs to the plant acyltransferase family. As to quaternary structure, monomer. In terms of tissue distribution, mainly expressed in petioles.

The catalysed reaction is isomeliandiol + acetyl-CoA = 21-O-acetyl-isomeliandiol + CoA. Its pathway is secondary metabolite biosynthesis; terpenoid biosynthesis. Its function is as follows. Acetyltransferase involved in the biosynthesis of limonoids triterpene natural products such as azadirachtin, an antifeedant widely used as bioinsecticide, and possessing many medicinal applications including anti-tumoral, anti-malarial, anti-rheumatic, antibacterial, anti-inflammatory, anti-pyretic and diuretic effects. Catalyzes the formation of 21-O-acetyl-isomeliandiol from isomeliandiol. The protein is Limonoid 21-O-acetyltransferse of Melia azedarach (Chinaberry tree).